Consider the following 304-residue polypeptide: Protease HtpX homolog 1 (304 aa).

2 consecutive transmembrane segments (helical) span residues 17–37 (VTLF…IALL) and 39–59 (SWVL…WFSD). Histidine 140 contributes to the Zn(2+) binding site. Glutamate 141 is an active-site residue. Zn(2+) is bound at residue histidine 144. The next 2 membrane-spanning stretches (helical) occupy residues 151–171 (AVIT…RFAF) and 186–206 (AVLA…FLLI). Glutamate 214 is a binding site for Zn(2+).

This sequence belongs to the peptidase M48B family. Zn(2+) serves as cofactor.

Its subcellular location is the cell membrane. The sequence is that of Protease HtpX homolog 1 from Streptomyces coelicolor (strain ATCC BAA-471 / A3(2) / M145).